Reading from the N-terminus, the 1308-residue chain is Contactin-associated protein-like 4 (1308 aa).

Positions 1 to 25 (MGSVTGAVLKTLLLLSTQNWNRVEA) are cleaved as a signal peptide. Residues 26–1241 (GNSYDCDDPL…LANAIKSDSA (1216 aa)) lie on the Extracellular side of the membrane. The region spanning 31 to 177 (CDDPLVSALP…IGMRIEVFGC (147 aa)) is the F5/8 type C domain. Cysteines 31 and 177 form a disulfide. 2 Laminin G-like domains span residues 212-364 (FKTM…SFSC) and 398-547 (FRTW…IDSC). N-linked (GlcNAc...) asparagine glycans are attached at residues N260, N285, N359, and N538. Intrachain disulfides connect C332–C364, C515–C547, C553–C564, and C558–C573. An EGF-like 1 domain is found at 549-586 (ISDRCLPNYCEHGGECSQSWSTFHCNCTNTGYRGATCH). N574 is a glycosylation site (N-linked (GlcNAc...) asparagine). C575 and C585 are disulfide-bonded. Residues 587–792 (NSIYEQSCEA…LLCQGDRSFW (206 aa)) form the Fibrinogen C-terminal domain. N602, N625, N637, N706, and N748 each carry an N-linked (GlcNAc...) asparagine glycan. A Laminin G-like 3 domain is found at 793–957 (NSASFDTEAS…AQVTPEVQPG (165 aa)). 4 disulfides stabilise this stretch: C931/C958, C962/C975, C969/C984, and C986/C996. An EGF-like 2 domain is found at 958–997 (CRGHCSSYGKLCRNGGKCRERPIGFFCDCTFSAYTGPFCS). N-linked (GlcNAc...) asparagine glycosylation is found at N1023 and N1073. One can recognise a Laminin G-like 4 domain in the interval 1046-1202 (FRTTRTPSLL…VTGHVTESSC (157 aa)). An intrachain disulfide couples C1167 to C1202. A helical membrane pass occupies residues 1242–1262 (VIGGLIAVVIFILLCITAIAV). At 1263–1308 (RIYQQKRLYKRSEAKRSENVDSAEAVLKSELNIQNAVNENQKEYFF) the chain is on the cytoplasmic side.

The protein belongs to the neurexin family. As to quaternary structure, interacts with TIAM1.

Its subcellular location is the presynaptic cell membrane. In terms of biological role, presynaptic protein involved in both dopaminergic synaptic transmission and GABAergic system, thereby participating in the structural maturation of inhibitory interneuron synapses. Involved in the dopaminergic synaptic transmission by attenuating dopamine release through a presynaptic mechanism. Also participates in the GABAergic system. This is Contactin-associated protein-like 4 (CNTNAP4) from Homo sapiens (Human).